Here is a 312-residue protein sequence, read N- to C-terminus: Porphobilinogen deaminase (312 aa).

Cys241 is subject to S-(dipyrrolylmethanemethyl)cysteine.

Belongs to the HMBS family. Monomer. The cofactor is dipyrromethane.

It carries out the reaction 4 porphobilinogen + H2O = hydroxymethylbilane + 4 NH4(+). It functions in the pathway porphyrin-containing compound metabolism; protoporphyrin-IX biosynthesis; coproporphyrinogen-III from 5-aminolevulinate: step 2/4. Functionally, tetrapolymerization of the monopyrrole PBG into the hydroxymethylbilane pre-uroporphyrinogen in several discrete steps. In Aliarcobacter butzleri (strain RM4018) (Arcobacter butzleri), this protein is Porphobilinogen deaminase.